We begin with the raw amino-acid sequence, 88 residues long: UPF0297 protein GTNG_2488 (88 aa).

Belongs to the UPF0297 family.

The sequence is that of UPF0297 protein GTNG_2488 from Geobacillus thermodenitrificans (strain NG80-2).